Reading from the N-terminus, the 72-residue chain is UPF0154 protein lhv_1362 (72 aa).

A helical transmembrane segment spans residues 3–23 (LGLAIFLIIIALLVGAVAGFY).

It belongs to the UPF0154 family.

Its subcellular location is the cell membrane. This Lactobacillus helveticus (strain DPC 4571) protein is UPF0154 protein lhv_1362.